The sequence spans 356 residues: MGSTCSTPESKEQKRINSVIDKQIRKDEDDEIGNQKLLLLGTGECGKSTILKQINILHSSGFSKADLKNVAGTVYSNIIQGVATLLKAKDHFYYELSTPELDADAQHILSLADSSKDAMPFIPLTFNAIKRLWHDPVVQKTFERRAEFQMMDTLVYFMNELDRINNADYIPTVDDMLRIRIPTMGVVQQTIEIKGTKFRIYDVGGQRSERRKWIHLFDNVNATIFISAINEFNQKLNEDGQTNRMKESIKLFETICNSRWFVQAAMILFLNKRDLFEQKLKTTSINVLFSTYQGSNDYAECVAYIQMRFERLNKYSDIKKIYTHVTCATDTNQIQLVIDSVVDMVIGRNLRGTGME.

Residue Gly2 is the site of N-myristoyl glycine attachment. Cys5 carries the S-palmitoyl cysteine lipid modification. The 324-residue stretch at 33–356 (GNQKLLLLGT…GRNLRGTGME (324 aa)) folds into the G-alpha domain. The tract at residues 36-49 (KLLLLGTGECGKST) is G1 motif. Residues 41–48 (GTGECGKS), 177–183 (LRIRIPT), 202–206 (DVGGQ), 271–274 (NKRD), and Ala328 each bind GTP. Mg(2+) contacts are provided by Ser48 and Thr183. The segment at 175 to 183 (DMLRIRIPT) is G2 motif. A G3 motif region spans residues 198-207 (FRIYDVGGQR). The segment at 267–274 (ILFLNKRD) is G4 motif. The tract at residues 326-331 (TCATDT) is G5 motif.

This sequence belongs to the G-alpha family. G proteins are composed of 3 units; alpha, beta and gamma. The alpha chain contains the guanine nucleotide binding site.

Its function is as follows. Guanine nucleotide-binding proteins (G proteins) are involved as modulators or transducers in various transmembrane signaling systems. The protein is Guanine nucleotide-binding protein alpha-15 subunit (gpa-15) of Caenorhabditis elegans.